The chain runs to 92 residues: Small cysteine and glycine repeat-containing protein 9 (92 aa).

Residues 4 to 72 (CGCGSCGCSG…CCRRTCSSCG (69 aa)) form an 11 X 2 AA repeats of CG region.

This sequence belongs to the KRTAP type 28 family.

Its function is as follows. In the hair cortex, hair keratin intermediate filaments are embedded in an interfilamentous matrix, consisting of hair keratin-associated proteins (KRTAP), which are essential for the formation of a rigid and resistant hair shaft through their extensive disulfide bond cross-linking with abundant cysteine residues of hair keratins. The matrix proteins include the high-sulfur and high-glycine-tyrosine keratins. The protein is Small cysteine and glycine repeat-containing protein 9 of Homo sapiens (Human).